A 122-amino-acid chain; its full sequence is Small ribosomal subunit protein bS6 (122 aa).

The tract at residues 97 to 122 (TAPSPMMKAVQKEDAAKSHRAEAPAA) is disordered. Positions 106 to 122 (VQKEDAAKSHRAEAPAA) are enriched in basic and acidic residues.

This sequence belongs to the bacterial ribosomal protein bS6 family.

Its function is as follows. Binds together with bS18 to 16S ribosomal RNA. This Janthinobacterium sp. (strain Marseille) (Minibacterium massiliensis) protein is Small ribosomal subunit protein bS6.